Here is a 264-residue protein sequence, read N- to C-terminus: Glucosamine-6-phosphate deaminase (264 aa).

Aspartate 72 acts as the Proton acceptor; for enolization step in catalysis. Aspartate 141 serves as the catalytic For ring-opening step. Catalysis depends on histidine 143, which acts as the Proton acceptor; for ring-opening step. The For ring-opening step role is filled by glutamate 148.

The protein belongs to the glucosamine/galactosamine-6-phosphate isomerase family. NagB subfamily. In terms of assembly, homohexamer.

The enzyme catalyses alpha-D-glucosamine 6-phosphate + H2O = beta-D-fructose 6-phosphate + NH4(+). It functions in the pathway amino-sugar metabolism; N-acetylneuraminate degradation; D-fructose 6-phosphate from N-acetylneuraminate: step 5/5. Its activity is regulated as follows. Allosterically activated by N-acetylglucosamine 6-phosphate (GlcNAc6P). Its function is as follows. Catalyzes the reversible isomerization-deamination of glucosamine 6-phosphate (GlcN6P) to form fructose 6-phosphate (Fru6P) and ammonium ion. This Glaesserella parasuis serovar 5 (strain SH0165) (Haemophilus parasuis) protein is Glucosamine-6-phosphate deaminase.